Here is a 35-residue protein sequence, read N- to C-terminus: Mu-theraphotoxin-Pm1a (35 aa).

Disulfide bonds link Cys-3/Cys-17, Cys-10/Cys-22, and Cys-16/Cys-29. A Phenylalanine amide modification is found at Phe-35.

This sequence belongs to the neurotoxin 10 (Hwtx-1) family. 62 (Vatx) subfamily. Expressed by the venom gland.

Its subcellular location is the secreted. Functionally, gating-modifier toxin with weak activity on Nav1.7/SCN9A and Nav1.8/SCN10A. Inhibits Nav1.7/SCN9A peak current (IC(50)=334 nM) and shifts the voltage dependence of activation to more depolarised membrane potentials. Shows 21% peak current inhibition (at 10 uM) on Nav1.8/SCN10A sodium channels. The sequence is that of Mu-theraphotoxin-Pm1a from Poecilotheria metallica (Metallic blue ornamental tree spider).